The primary structure comprises 719 residues: Probable disease resistance protein At4g14610 (719 aa).

Residues Ser25 to Leu73 adopt a coiled-coil conformation. Positions Glu114–Pro418 constitute an NB-ARC domain. Gly156 to Thr163 lines the ATP pocket. 3 LRR repeats span residues Ala400 to Pro421, Gln422 to Phe444, and Asn447 to Val469.

It belongs to the disease resistance NB-LRR family.

Functionally, probable disease resistance protein. In Arabidopsis thaliana (Mouse-ear cress), this protein is Probable disease resistance protein At4g14610.